Here is a 420-residue protein sequence, read N- to C-terminus: Na(+)/H(+) antiporter NhaA (420 aa).

A run of 10 helical transmembrane segments spans residues 34 to 54, 69 to 89, 107 to 127, 141 to 161, 168 to 190, 194 to 213, 271 to 291, 301 to 321, 342 to 362, and 374 to 394; these read TTGG…ANLG, LTIE…IAGL, LVPI…YTLF, IPMA…GAGL, FLLT…FFST, IWWL…MQHF, WSAG…HVSG, PISL…ITLG, IIAV…MTDL, and AKAS…AMLH.

It belongs to the NhaA Na(+)/H(+) (TC 2.A.33) antiporter family.

The protein resides in the cell membrane. It carries out the reaction Na(+)(in) + 2 H(+)(out) = Na(+)(out) + 2 H(+)(in). Na(+)/H(+) antiporter that extrudes sodium in exchange for external protons. This Cutibacterium acnes (strain DSM 16379 / KPA171202) (Propionibacterium acnes) protein is Na(+)/H(+) antiporter NhaA.